Reading from the N-terminus, the 216-residue chain is Probable transaldolase (216 aa).

The Schiff-base intermediate with substrate role is filled by K83.

Belongs to the transaldolase family. Type 3B subfamily.

The protein resides in the cytoplasm. The enzyme catalyses D-sedoheptulose 7-phosphate + D-glyceraldehyde 3-phosphate = D-erythrose 4-phosphate + beta-D-fructose 6-phosphate. It functions in the pathway carbohydrate degradation; pentose phosphate pathway; D-glyceraldehyde 3-phosphate and beta-D-fructose 6-phosphate from D-ribose 5-phosphate and D-xylulose 5-phosphate (non-oxidative stage): step 2/3. Its function is as follows. Transaldolase is important for the balance of metabolites in the pentose-phosphate pathway. This chain is Probable transaldolase, found in Thermosipho africanus (strain TCF52B).